Reading from the N-terminus, the 287-residue chain is Prepilin leader peptidase/N-methyltransferase (287 aa).

The helical transmembrane segment at 12–32 (FMYLVVGLFSLAVGSLLNVII) threads the bilayer. 4 residues coordinate Zn(2+): Cys-71, Cys-74, Cys-96, and Cys-99. The next 5 helical transmembrane spans lie at 127–147 (FTIQLLFALLAIWILISLVFI), 158–178 (LTLGLLWIGLIANTQNVFVSL), 182–202 (VLSCAGAYLALWLFINLFYLM), 215–235 (LFAAFGAWLGWMYLPIILLIS), and 259–279 (PFGPFLCISGLIAMFWGDSII).

This sequence belongs to the peptidase A24 family. The cofactor is Zn(2+).

Its subcellular location is the cell inner membrane. It carries out the reaction Typically cleaves a -Gly-|-Phe- bond to release an N-terminal, basic peptide of 5-8 residues from type IV prepilin, and then N-methylates the new N-terminal amino group, the methyl donor being S-adenosyl-L-methionine.. Its function is as follows. Plays an essential role in type IV pili and type II pseudopili formation by proteolytically removing the leader sequence from substrate proteins and subsequently monomethylating the alpha-amino group of the newly exposed N-terminal phenylalanine. The sequence is that of Prepilin leader peptidase/N-methyltransferase (pilD) from Legionella pneumophila.